A 111-amino-acid polypeptide reads, in one-letter code: ATP-dependent Clp protease adapter protein ClpS (111 aa).

It belongs to the ClpS family. Binds to the N-terminal domain of the chaperone ClpA.

In terms of biological role, involved in the modulation of the specificity of the ClpAP-mediated ATP-dependent protein degradation. In Legionella pneumophila (strain Paris), this protein is ATP-dependent Clp protease adapter protein ClpS.